A 306-amino-acid polypeptide reads, in one-letter code: Putative transcriptional regulator (306 aa).

The 61-residue stretch at 1–61 (MIKRNLNDLL…TRTTRSVSPT (61 aa)) folds into the HTH lysR-type domain. A DNA-binding region (H-T-H motif) is located at residues 21–40 (FTRAAAQLGVTQSALSQSIS).

This sequence belongs to the LysR transcriptional regulatory family.

May have a role in the regulation of oprD expression. The polypeptide is Putative transcriptional regulator (Pseudomonas aeruginosa (strain ATCC 15692 / DSM 22644 / CIP 104116 / JCM 14847 / LMG 12228 / 1C / PRS 101 / PAO1)).